The following is an 888-amino-acid chain: Endochitinase A1 (888 aa).

Residues 1–22 (MVSSKLSFVATAVAALAPLASA) form the signal peptide. The 310-residue stretch at 29-338 (SNLAIYWGQG…DHMKDILLHC (310 aa)) folds into the GH18 domain. Glu174 acts as the Proton donor in catalysis. Disordered regions lie at residues 338–631 (CDPS…TTTA), 743–799 (PVTE…VSTS), and 813–855 (PLIL…YTQE). Positions 344–617 (VTSSSAIPSS…STDESSTTVG (274 aa)) are enriched in low complexity. N-linked (GlcNAc...) asparagine glycosylation is present at Asn622. Polar residues predominate over residues 764–775 (EGSNPTQPSGAS). Asn780 carries an N-linked (GlcNAc...) asparagine glycan. Polar residues predominate over residues 835–855 (PSGQNSGSSSHVPIPPSYTQE). Gly863 is lipidated: GPI-anchor amidated glycine. A propeptide spans 864–888 (AASRVTGLGHGLVLTVLTLSAFFVL) (removed in mature form).

The protein belongs to the glycosyl hydrolase 18 family. Chitinase class III subfamily.

Its subcellular location is the cell membrane. The protein localises to the secreted. It localises to the cell wall. The enzyme catalyses Random endo-hydrolysis of N-acetyl-beta-D-glucosaminide (1-&gt;4)-beta-linkages in chitin and chitodextrins.. Its activity is regulated as follows. The cyclic peptide natural product argifin acts as a specific inhibitor. In terms of biological role, GPI-anchored chitinase involved in the degradation of chitin, a component of the cell walls of fungi and exoskeletal elements of some animals (including worms and arthropods). Required to reshape the cell wall at the sites where cell wall remodeling and/or cell wall maturation actively take place such as sites of conidia formation. The protein is Endochitinase A1 (chiA1) of Aspergillus fumigatus (strain ATCC MYA-4609 / CBS 101355 / FGSC A1100 / Af293) (Neosartorya fumigata).